The sequence spans 376 residues: Erythronate-4-phosphate dehydrogenase (376 aa).

Positions 45 and 67 each coordinate substrate. Aspartate 147 contacts NAD(+). Arginine 209 is an active-site residue. Residue aspartate 233 participates in NAD(+) binding. Glutamate 238 is a catalytic residue. The active-site Proton donor is histidine 255. Glycine 258 is a binding site for NAD(+). Residue tyrosine 259 coordinates substrate.

Belongs to the D-isomer specific 2-hydroxyacid dehydrogenase family. PdxB subfamily. As to quaternary structure, homodimer.

The protein localises to the cytoplasm. It carries out the reaction 4-phospho-D-erythronate + NAD(+) = (R)-3-hydroxy-2-oxo-4-phosphooxybutanoate + NADH + H(+). It functions in the pathway cofactor biosynthesis; pyridoxine 5'-phosphate biosynthesis; pyridoxine 5'-phosphate from D-erythrose 4-phosphate: step 2/5. Its function is as follows. Catalyzes the oxidation of erythronate-4-phosphate to 3-hydroxy-2-oxo-4-phosphonooxybutanoate. This chain is Erythronate-4-phosphate dehydrogenase, found in Shewanella baltica (strain OS185).